We begin with the raw amino-acid sequence, 182 residues long: Putative minor fimbrial subunit PmfF (182 aa).

Residues 1–22 form the signal peptide; it reads MKNSIIKSAITCLLLLSPSTFA.

This sequence belongs to the fimbrial protein family.

The protein localises to the fimbrium. This is Putative minor fimbrial subunit PmfF (pmfF) from Proteus mirabilis (strain HI4320).